The primary structure comprises 314 residues: Zinc-binding alcohol dehydrogenase domain-containing protein cipB (314 aa).

This sequence belongs to the zinc-containing alcohol dehydrogenase family.

Functionally, involved in osmoadaptation. This Emericella nidulans (strain FGSC A4 / ATCC 38163 / CBS 112.46 / NRRL 194 / M139) (Aspergillus nidulans) protein is Zinc-binding alcohol dehydrogenase domain-containing protein cipB (cipB).